We begin with the raw amino-acid sequence, 278 residues long: 4-hydroxy-tetrahydrodipicolinate reductase (278 aa).

NAD(+) contacts are provided by residues 16–21 (GAGGRM) and Glu42. Position 43 (Arg43) interacts with NADP(+). Residues 106–108 (GTT) and 130–133 (AGNY) each bind NAD(+). Catalysis depends on His163, which acts as the Proton donor/acceptor. His164 lines the (S)-2,3,4,5-tetrahydrodipicolinate pocket. The active-site Proton donor is the Lys167. 173–174 (GT) lines the (S)-2,3,4,5-tetrahydrodipicolinate pocket.

Belongs to the DapB family.

The protein localises to the cytoplasm. The catalysed reaction is (S)-2,3,4,5-tetrahydrodipicolinate + NAD(+) + H2O = (2S,4S)-4-hydroxy-2,3,4,5-tetrahydrodipicolinate + NADH + H(+). It carries out the reaction (S)-2,3,4,5-tetrahydrodipicolinate + NADP(+) + H2O = (2S,4S)-4-hydroxy-2,3,4,5-tetrahydrodipicolinate + NADPH + H(+). The protein operates within amino-acid biosynthesis; L-lysine biosynthesis via DAP pathway; (S)-tetrahydrodipicolinate from L-aspartate: step 4/4. Catalyzes the conversion of 4-hydroxy-tetrahydrodipicolinate (HTPA) to tetrahydrodipicolinate. In Psychrobacter arcticus (strain DSM 17307 / VKM B-2377 / 273-4), this protein is 4-hydroxy-tetrahydrodipicolinate reductase.